Here is a 151-residue protein sequence, read N- to C-terminus: Transcriptional repressor NrdR (151 aa).

A zinc finger spans residues 3-34 (CPYCGYGESKVVDSRATDDKMAIRRRRECLKC). Positions 49–139 (LLVIKKNMSR…VYRQFKDINT (91 aa)) constitute an ATP-cone domain.

It belongs to the NrdR family. Requires Zn(2+) as cofactor.

Negatively regulates transcription of bacterial ribonucleotide reductase nrd genes and operons by binding to NrdR-boxes. This Clostridium kluyveri (strain NBRC 12016) protein is Transcriptional repressor NrdR.